Reading from the N-terminus, the 244-residue chain is 1-(5-phosphoribosyl)-5-[(5-phosphoribosylamino)methylideneamino] imidazole-4-carboxamide isomerase (244 aa).

The active-site Proton acceptor is Asp10. The active-site Proton donor is Asp132.

Belongs to the HisA/HisF family.

Its subcellular location is the cytoplasm. It catalyses the reaction 1-(5-phospho-beta-D-ribosyl)-5-[(5-phospho-beta-D-ribosylamino)methylideneamino]imidazole-4-carboxamide = 5-[(5-phospho-1-deoxy-D-ribulos-1-ylimino)methylamino]-1-(5-phospho-beta-D-ribosyl)imidazole-4-carboxamide. The protein operates within amino-acid biosynthesis; L-histidine biosynthesis; L-histidine from 5-phospho-alpha-D-ribose 1-diphosphate: step 4/9. The protein is 1-(5-phosphoribosyl)-5-[(5-phosphoribosylamino)methylideneamino] imidazole-4-carboxamide isomerase of Stenotrophomonas maltophilia (strain K279a).